The sequence spans 599 residues: Elongation factor 4 (599 aa).

The tr-type G domain maps to 2-184 (KNIRNFSIIA…EIVAKIPAPK (183 aa)). GTP-binding positions include 14 to 19 (DHGKST) and 131 to 134 (NKID).

The protein belongs to the TRAFAC class translation factor GTPase superfamily. Classic translation factor GTPase family. LepA subfamily.

The protein resides in the cell inner membrane. The enzyme catalyses GTP + H2O = GDP + phosphate + H(+). Functionally, required for accurate and efficient protein synthesis under certain stress conditions. May act as a fidelity factor of the translation reaction, by catalyzing a one-codon backward translocation of tRNAs on improperly translocated ribosomes. Back-translocation proceeds from a post-translocation (POST) complex to a pre-translocation (PRE) complex, thus giving elongation factor G a second chance to translocate the tRNAs correctly. Binds to ribosomes in a GTP-dependent manner. This chain is Elongation factor 4, found in Mannheimia succiniciproducens (strain KCTC 0769BP / MBEL55E).